The primary structure comprises 263 residues: tRNA (guanine-N(7)-)-methyltransferase (263 aa).

The span at 1-10 (MLPQDPSTEP) shows a compositional bias: polar residues. Positions 1 to 38 (MLPQDPSTEPTPADDAAPVDSAGQASAPSPADPEGVAH) are disordered. Positions 91, 116, 143, and 166 each coordinate S-adenosyl-L-methionine. Asp-166 is an active-site residue. Lys-170 is a substrate binding site. The segment at 172 to 177 (RHNKRR) is interaction with RNA. Residues Asp-202 and 240–243 (TKFE) contribute to the substrate site.

This sequence belongs to the class I-like SAM-binding methyltransferase superfamily. TrmB family.

The enzyme catalyses guanosine(46) in tRNA + S-adenosyl-L-methionine = N(7)-methylguanosine(46) in tRNA + S-adenosyl-L-homocysteine. Its pathway is tRNA modification; N(7)-methylguanine-tRNA biosynthesis. Functionally, catalyzes the formation of N(7)-methylguanine at position 46 (m7G46) in tRNA. The polypeptide is tRNA (guanine-N(7)-)-methyltransferase (Cupriavidus necator (strain ATCC 17699 / DSM 428 / KCTC 22496 / NCIMB 10442 / H16 / Stanier 337) (Ralstonia eutropha)).